We begin with the raw amino-acid sequence, 379 residues long: Probable 3-phenylpropionic acid transporter (379 aa).

Topologically, residues 1–4 are cytoplasmic; that stretch reads MVLQ. The chain crosses the membrane as a helical span at residues 5 to 31; that stretch reads STRWLALGYFTYFFSYGIFLPFWSVWL. Residues 32-37 are Periplasmic-facing; that stretch reads KGIGLT. A helical membrane pass occupies residues 38 to 66; the sequence is PETIGLLLGAGLVARFLGSLLIAPRVSDP. The Cytoplasmic portion of the chain corresponds to 67-70; that stretch reads SRLI. Residues 71–96 traverse the membrane as a helical segment; it reads SALRVLALLTLLFAVAFWAGAHVAWL. The Periplasmic segment spans residues 97-100; that stretch reads MLVM. The chain crosses the membrane as a helical span at residues 101–118; sequence IGFNLFFSPLVPLTDALA. Residues 119–129 are Cytoplasmic-facing; sequence NTWQKQFPLDY. A helical transmembrane segment spans residues 130 to 152; sequence GKVRLWGSVAFVIGSALTGKLVT. Residues 153 to 155 are Periplasmic-facing; that stretch reads MFD. Residues 156–175 form a helical membrane-spanning segment; that stretch reads YRVILALLTLGVASMLLGFL. The Cytoplasmic segment spans residues 176-207; the sequence is IRPTIQPQGASRQQESTGWSAWLALVRQNWRF. Residues 208–227 traverse the membrane as a helical segment; sequence LACVCLLQGAHAAYYGFSAI. The Periplasmic segment spans residues 228 to 231; the sequence is YWQA. The chain crosses the membrane as a helical span at residues 232-256; sequence AGYSASAVGYLWSLGVVAEVIIFAL. Residues 257-266 lie on the Cytoplasmic side of the membrane; the sequence is SNKLFRRCSA. A helical membrane pass occupies residues 267 to 286; that stretch reads RDMLLISAICGVVRWGIMGA. Topologically, residues 287 to 289 are periplasmic; the sequence is TTA. The chain crosses the membrane as a helical span at residues 290 to 312; it reads LPWLIVVQILHCGTFTVCHLAAM. The Cytoplasmic segment spans residues 313–323; that stretch reads RYIAARQGSEV. The helical transmembrane segment at 324–351 threads the bilayer; sequence IRLQAVYSAVAMGGSIAIMTVFAGFLYQ. The Periplasmic portion of the chain corresponds to 352-354; sequence YLG. A helical membrane pass occupies residues 355-375; it reads HGVFWVMALVALPAMFLRPKV. Residues 376–379 lie on the Cytoplasmic side of the membrane; the sequence is VPSC.

The protein belongs to the major facilitator superfamily. Phenyl propionate permease (PPP) (TC 2.A.1.27) family.

The protein localises to the cell inner membrane. Its function is as follows. Probable permease involved in the uptake of 3-phenylpropionic acid. The sequence is that of Probable 3-phenylpropionic acid transporter (hcaT) from Escherichia coli (strain K12).